Reading from the N-terminus, the 345-residue chain is Fe(3+) ions import ATP-binding protein FbpC (345 aa).

One can recognise an ABC transporter domain in the interval 4–236; sequence LELHGIGKSY…PVDEPTASFL (233 aa). ATP is bound at residue 36-43; it reads GPSGSGKT.

It belongs to the ABC transporter superfamily. Fe(3+) ion importer (TC 3.A.1.10) family. In terms of assembly, the complex is composed of two ATP-binding proteins (FbpC), two transmembrane proteins (FbpB) and a solute-binding protein (FbpA).

It is found in the cell inner membrane. The catalysed reaction is Fe(3+)(out) + ATP + H2O = Fe(3+)(in) + ADP + phosphate + H(+). Its function is as follows. Part of the ABC transporter complex FbpABC involved in Fe(3+) ions import. Responsible for energy coupling to the transport system. This is Fe(3+) ions import ATP-binding protein FbpC from Serratia marcescens.